The chain runs to 644 residues: Translation factor guf1, mitochondrial (644 aa).

The transit peptide at 1 to 31 directs the protein to the mitochondrion; the sequence is MTLRRFSYTFQARILRGLQARPVFVLPSRSH. A tr-type G domain is found at 51–232; it reads VNIRNWAIIS…AIIQRVPHPI (182 aa). Residues 60-67, 125-129, and 179-182 contribute to the GTP site; these read SHIDHGKS, DTPGH, and NKID.

It belongs to the TRAFAC class translation factor GTPase superfamily. Classic translation factor GTPase family. LepA subfamily.

It localises to the mitochondrion inner membrane. It catalyses the reaction GTP + H2O = GDP + phosphate + H(+). Its function is as follows. Promotes mitochondrial protein synthesis. May act as a fidelity factor of the translation reaction, by catalyzing a one-codon backward translocation of tRNAs on improperly translocated ribosomes. Binds to mitochondrial ribosomes in a GTP-dependent manner. The polypeptide is Translation factor guf1, mitochondrial (guf1) (Schizosaccharomyces japonicus (strain yFS275 / FY16936) (Fission yeast)).